The chain runs to 109 residues: Aquaporin-2 (109 aa).

Over 1–6 the chain is Cytoplasmic; that stretch reads SIAFSR. Residues 7–27 form a helical membrane-spanning segment; the sequence is AVLAEFLATLLFVFFGLGSAL. Residues 28–35 are Extracellular-facing; that stretch reads NWPQAMPS. Residues 36-54 traverse the membrane as a helical segment; the sequence is VLQIAMAFGLAIGTLVQAL. Topologically, residues 55–59 are cytoplasmic; sequence GHVSG. The segment at residues 60–69 is an intramembrane region (discontinuously helical); sequence AHINPAVTVA. The NPA 1 signature appears at 63-65; it reads NPA. Residues 70–80 are Cytoplasmic-facing; that stretch reads CLVGCHVSFLR. Residues 81–102 form a helical membrane-spanning segment; that stretch reads AAFYVAAQLLGAVAGAALLHEI. Topologically, residues 103-109 are extracellular; that stretch reads TPPDIRR.

This sequence belongs to the MIP/aquaporin (TC 1.A.8) family. Homotetramer. In terms of processing, serine phosphorylation is necessary and sufficient for expression at the apical membrane. Endocytosis is not phosphorylation-dependent. N-glycosylated.

The protein resides in the apical cell membrane. Its subcellular location is the basolateral cell membrane. It localises to the cell membrane. The protein localises to the cytoplasmic vesicle membrane. It is found in the golgi apparatus. The protein resides in the trans-Golgi network membrane. It catalyses the reaction H2O(in) = H2O(out). It carries out the reaction glycerol(in) = glycerol(out). Functionally, forms a water-specific channel that provides the plasma membranes of renal collecting duct with high permeability to water, thereby permitting water to move in the direction of an osmotic gradient. Plays an essential role in renal water homeostasis. Could also be permeable to glycerol. This Equus caballus (Horse) protein is Aquaporin-2.